The primary structure comprises 357 residues: 3-isopropylmalate dehydrogenase (357 aa).

NAD(+) is bound at residue 76-89; sequence GPKWDALDSNIRPE. Positions 96, 106, 134, and 224 each coordinate substrate. Mg(2+)-binding residues include Asp224, Asp248, and Asp252. 282-294 serves as a coordination point for NAD(+); sequence GSAPDIAGQGVAN.

Belongs to the isocitrate and isopropylmalate dehydrogenases family. LeuB type 1 subfamily. Homodimer. The cofactor is Mg(2+). It depends on Mn(2+) as a cofactor.

It is found in the cytoplasm. It catalyses the reaction (2R,3S)-3-isopropylmalate + NAD(+) = 4-methyl-2-oxopentanoate + CO2 + NADH. It functions in the pathway amino-acid biosynthesis; L-leucine biosynthesis; L-leucine from 3-methyl-2-oxobutanoate: step 3/4. Its function is as follows. Catalyzes the oxidation of 3-carboxy-2-hydroxy-4-methylpentanoate (3-isopropylmalate) to 3-carboxy-4-methyl-2-oxopentanoate. The product decarboxylates to 4-methyl-2 oxopentanoate. This chain is 3-isopropylmalate dehydrogenase, found in Saccharophagus degradans (strain 2-40 / ATCC 43961 / DSM 17024).